The chain runs to 402 residues: Probable peptidoglycan glycosyltransferase FtsW (402 aa).

Residues 1-24 lie on the Cytoplasmic side of the membrane; it reads MLYRLKLLLSGQNTKKERVRAKLE. A helical transmembrane segment spans residues 25 to 45; that stretch reads IDISIVFVMLGLLIFGWVMVT. The Periplasmic segment spans residues 46–63; the sequence is SASMVVALDDYNNPYFYS. The chain crosses the membrane as a helical span at residues 64 to 84; the sequence is IRQGFFAVIAIFLFLLALLVP. The Cytoplasmic segment spans residues 85 to 91; that stretch reads TKNYEKN. A helical membrane pass occupies residues 92 to 112; the sequence is YNAFFFIMLIVLVAVLVPGVG. Over 113–121 the chain is Periplasmic; sequence KSVNGARRW. A helical transmembrane segment spans residues 122 to 142; sequence IPLIIINIQVAELAKLLAIIF. Residues 143–160 are Cytoplasmic-facing; sequence FSGYIAENLPKMTNFKEG. The next 2 helical transmembrane spans lie at 161 to 181 and 182 to 202; these read ILTPITLLGCIAVLLLMQPDF and GSTVVISICVMGMLFVSGNKV. R203 is a topological domain (cytoplasmic). A helical membrane pass occupies residues 204–224; it reads WYGLLIGAMLIMATMLVIISP. At 225–284 the chain is on the periplasmic side; the sequence is YRMHRITGFLHPWENANGSGYQLVQALIGFGRGGWFGDGLGNGVQKQFFLPEAHTDFITS. A helical transmembrane segment spans residues 285–305; it reads VIAEEIGVIGLMILLMVYLFI. Residues 306-324 lie on the Cytoplasmic side of the membrane; that stretch reads VFRAMNIAKMAFELKRYYQ. The chain crosses the membrane as a helical span at residues 325-345; sequence AFLSYGISFWIGFQVFVNIGV. Residues 346–357 lie on the Periplasmic side of the membrane; the sequence is NTGLLPTKGLTL. Residues 358 to 378 traverse the membrane as a helical segment; the sequence is PLISYGGSSLLIMCFTLGILV. The Cytoplasmic segment spans residues 379 to 402; sequence RVDFENKLLADTINPKYIYKKVRK.

It belongs to the SEDS family. FtsW subfamily.

It localises to the cell inner membrane. The enzyme catalyses [GlcNAc-(1-&gt;4)-Mur2Ac(oyl-L-Ala-gamma-D-Glu-L-Lys-D-Ala-D-Ala)](n)-di-trans,octa-cis-undecaprenyl diphosphate + beta-D-GlcNAc-(1-&gt;4)-Mur2Ac(oyl-L-Ala-gamma-D-Glu-L-Lys-D-Ala-D-Ala)-di-trans,octa-cis-undecaprenyl diphosphate = [GlcNAc-(1-&gt;4)-Mur2Ac(oyl-L-Ala-gamma-D-Glu-L-Lys-D-Ala-D-Ala)](n+1)-di-trans,octa-cis-undecaprenyl diphosphate + di-trans,octa-cis-undecaprenyl diphosphate + H(+). It functions in the pathway cell wall biogenesis; peptidoglycan biosynthesis. Its function is as follows. Peptidoglycan polymerase that is essential for cell division. The polypeptide is Probable peptidoglycan glycosyltransferase FtsW (Francisella salina).